We begin with the raw amino-acid sequence, 390 residues long: Probable NADH-dependent butanol dehydrogenase 2 (390 aa).

The protein belongs to the iron-containing alcohol dehydrogenase family.

It participates in alcohol metabolism; butanol biosynthesis. In Bacillus subtilis (strain 168), this protein is Probable NADH-dependent butanol dehydrogenase 2 (yugK).